The following is a 238-amino-acid chain: Lactate utilization protein A (238 aa).

The protein belongs to the LutA/YkgE family.

Is involved in L-lactate degradation and allows cells to grow with lactate as the sole carbon source. The sequence is that of Lactate utilization protein A from Bacillus pumilus (strain SAFR-032).